A 589-amino-acid chain; its full sequence is Cyclohexane-1,2-dione hydrolase (589 aa).

Thiamine diphosphate is bound at residue E52. The interval 400–480 is thiamine pyrophosphate binding; it reads NHTLPMFGGA…VITMVFTNES (81 aa). Residues D451 and N478 each contribute to the Mg(2+) site.

This sequence belongs to the TPP enzyme family. In terms of assembly, homodimer. Mg(2+) serves as cofactor. Thiamine diphosphate is required as a cofactor. The cofactor is FAD.

The catalysed reaction is cyclohexan-1,2-dione + H2O = 6-oxohexanoate + H(+). In terms of biological role, catalyzes the ring-opening cleavage of the alicyclic alcohol cyclohexane-1,2-dione. In Azoarcus sp, this protein is Cyclohexane-1,2-dione hydrolase.